Here is a 932-residue protein sequence, read N- to C-terminus: 2-oxoglutarate dehydrogenase E1 component (932 aa).

The protein belongs to the alpha-ketoglutarate dehydrogenase family. Homodimer. Part of the 2-oxoglutarate dehydrogenase (OGDH) complex composed of E1 (2-oxoglutarate dehydrogenase), E2 (dihydrolipoamide succinyltransferase) and E3 (dihydrolipoamide dehydrogenase); the complex contains multiple copies of the three enzymatic components (E1, E2 and E3). Thiamine diphosphate is required as a cofactor.

The catalysed reaction is N(6)-[(R)-lipoyl]-L-lysyl-[protein] + 2-oxoglutarate + H(+) = N(6)-[(R)-S(8)-succinyldihydrolipoyl]-L-lysyl-[protein] + CO2. Its function is as follows. E1 component of the 2-oxoglutarate dehydrogenase (OGDH) complex which catalyzes the decarboxylation of 2-oxoglutarate, the first step in the conversion of 2-oxoglutarate to succinyl-CoA and CO(2). The chain is 2-oxoglutarate dehydrogenase E1 component from Staphylococcus aureus (strain USA300).